Here is a 335-residue protein sequence, read N- to C-terminus: GTPase Obg (335 aa).

In terms of domain architecture, Obg spans 1–159; that stretch reads MKFVDSAKIS…YELEMELKLM (159 aa). Residues 160–323 enclose the OBG-type G domain; that stretch reads ADVGLVGFPN…LKDELWRQVS (164 aa). GTP-binding positions include 166 to 173, 191 to 195, 213 to 216, 280 to 283, and 304 to 306; these read GFPNAGKS, FTTLV, DIPG, TKMD, and SSV. Positions 173 and 193 each coordinate Mg(2+).

The protein belongs to the TRAFAC class OBG-HflX-like GTPase superfamily. OBG GTPase family. As to quaternary structure, monomer. Mg(2+) is required as a cofactor.

It localises to the cytoplasm. An essential GTPase which binds GTP, GDP and possibly (p)ppGpp with moderate affinity, with high nucleotide exchange rates and a fairly low GTP hydrolysis rate. Plays a role in control of the cell cycle, stress response, ribosome biogenesis and in those bacteria that undergo differentiation, in morphogenesis control. The protein is GTPase Obg of Chlorobaculum tepidum (strain ATCC 49652 / DSM 12025 / NBRC 103806 / TLS) (Chlorobium tepidum).